Here is a 358-residue protein sequence, read N- to C-terminus: MRDRLLAAEKVKAIDWRDDALYLLDQRVLPFEEVWHRYTTAEGVAEAIRTMVVRGAPAIGISAAYGAVLAARARIAQGADWYPALEEDMQLLADSRPTAVNLFWALNRMRDRLMRVKDGDDPLAALEAEAVAIHLSDREANLTMAQLGADLIRKHQGNLQTVLTHCNTGALATGGFGTALGVIRAAHLEGMIERVYADETRPWLQGSRLTAWELANEGIPVTLNADSAAAHLMRTKGITWVIVGADRITANGDVANKIGTYQLAVAAMHHGVRFMVVAPSSTIDMEMASGDDIVIEERDGRELLEVGGQRVGAEVEAFNPVFDVTPADLIDAIVTEKGIVERPDTARMAQLMSRKHLH.

Residues R54–A56, R96, and Q205 each bind substrate. The active-site Proton donor is D246. Residue N256–K257 coordinates substrate.

This sequence belongs to the eIF-2B alpha/beta/delta subunits family. MtnA subfamily.

It catalyses the reaction 5-(methylsulfanyl)-alpha-D-ribose 1-phosphate = 5-(methylsulfanyl)-D-ribulose 1-phosphate. It participates in amino-acid biosynthesis; L-methionine biosynthesis via salvage pathway; L-methionine from S-methyl-5-thio-alpha-D-ribose 1-phosphate: step 1/6. Functionally, catalyzes the interconversion of methylthioribose-1-phosphate (MTR-1-P) into methylthioribulose-1-phosphate (MTRu-1-P). This is Methylthioribose-1-phosphate isomerase from Pseudomonas syringae pv. syringae (strain B728a).